The primary structure comprises 224 residues: Holliday junction branch migration complex subunit RuvA (224 aa).

The segment at 1–64 is domain I; sequence MIGRLSGVLV…EDLLQLYGFP (64 aa). A domain II region spans residues 65-143; that stretch reads TLLEKEWHRL…EVMAMGGTLE (79 aa). The segment at 144–171 is flexible linker; it reads AALDGVIEDGMAASEGIEPPSAARPAVP. A domain III region spans residues 172 to 224; sequence SAASDQAGALSALVNLGYGQGEAASAVATAAGEGAVGETDIIRAALRLLAPKG.

This sequence belongs to the RuvA family. In terms of assembly, homotetramer. Forms an RuvA(8)-RuvB(12)-Holliday junction (HJ) complex. HJ DNA is sandwiched between 2 RuvA tetramers; dsDNA enters through RuvA and exits via RuvB. An RuvB hexamer assembles on each DNA strand where it exits the tetramer. Each RuvB hexamer is contacted by two RuvA subunits (via domain III) on 2 adjacent RuvB subunits; this complex drives branch migration. In the full resolvosome a probable DNA-RuvA(4)-RuvB(12)-RuvC(2) complex forms which resolves the HJ.

The protein resides in the cytoplasm. Its function is as follows. The RuvA-RuvB-RuvC complex processes Holliday junction (HJ) DNA during genetic recombination and DNA repair, while the RuvA-RuvB complex plays an important role in the rescue of blocked DNA replication forks via replication fork reversal (RFR). RuvA specifically binds to HJ cruciform DNA, conferring on it an open structure. The RuvB hexamer acts as an ATP-dependent pump, pulling dsDNA into and through the RuvAB complex. HJ branch migration allows RuvC to scan DNA until it finds its consensus sequence, where it cleaves and resolves the cruciform DNA. The chain is Holliday junction branch migration complex subunit RuvA from Dinoroseobacter shibae (strain DSM 16493 / NCIMB 14021 / DFL 12).